Consider the following 2290-residue polypeptide: Protein Ycf2 (2290 aa).

1644–1651 lines the ATP pocket; the sequence is GSIGTGRS.

Belongs to the Ycf2 family.

It is found in the plastid. Its subcellular location is the chloroplast stroma. Its function is as follows. Probable ATPase of unknown function. Its presence in a non-photosynthetic plant (Epifagus virginiana) and experiments in tobacco indicate that it has an essential function which is probably not related to photosynthesis. The protein is Protein Ycf2 of Barbarea verna (Land cress).